A 379-amino-acid polypeptide reads, in one-letter code: Homoserine O-succinyltransferase (379 aa).

The AB hydrolase-1 domain maps to 51–360; sequence NAVLICHALS…DAPQGHDAFL (310 aa). The Nucleophile role is filled by S157. Position 227 (R227) interacts with substrate. Catalysis depends on residues D323 and H356. D357 lines the substrate pocket.

It belongs to the AB hydrolase superfamily. MetX family. As to quaternary structure, homodimer.

The protein resides in the cytoplasm. It catalyses the reaction L-homoserine + succinyl-CoA = O-succinyl-L-homoserine + CoA. The protein operates within amino-acid biosynthesis; L-methionine biosynthesis via de novo pathway; O-succinyl-L-homoserine from L-homoserine: step 1/1. Transfers a succinyl group from succinyl-CoA to L-homoserine, forming succinyl-L-homoserine. This is Homoserine O-succinyltransferase from Pseudomonas savastanoi pv. phaseolicola (strain 1448A / Race 6) (Pseudomonas syringae pv. phaseolicola (strain 1448A / Race 6)).